We begin with the raw amino-acid sequence, 914 residues long: Dynamin-2A (914 aa).

Residue methionine 1 is modified to N-acetylmethionine. The Dynamin-type G domain maps to 35–303; it reads PATFLNVVAL…IRSRMKLRLP (269 aa). The interval 45–52 is G1 motif; sequence GNVGAGKS. 45 to 52 lines the GTP pocket; sequence GNVGAGKS. Positions 71 to 73 are G2 motif; that stretch reads ATR. The G3 motif stretch occupies residues 143–146; the sequence is DLPG. Residues 143-147 and 204-207 each bind GTP; these read DLPGL and GKID. The tract at residues 204–207 is G4 motif; it reads GKID. The segment at 238-241 is G5 motif; sequence AVIG. The span at 507-522 shows a compositional bias: basic and acidic residues; that stretch reads RREEELKGRSSKKGQD. Disordered stretches follow at residues 507-570 and 629-648; these read RREE…TAGP and PEDE…NGPD. Polar residues predominate over residues 523–535; it reads AEQSLLSRATSPQ. Basic and acidic residues-rich tracts occupy residues 547–560 and 634–645; these read SMKD…KETP and EKSKSSKDKKAN. One can recognise a PH domain in the interval 572-696; it reads GEITAGYLMK…WINKLQKVIQ (125 aa). The GED domain maps to 730-823; sequence LRWMSQEVRG…QLSIHDNRAA (94 aa). Residues 781-805 are a coiled coil; it reads NERIESLIQEDQNVKRRRERYQKQS. The tract at residues 821–914 is disordered; it reads RAAAASSYSD…PPPTGSAYRY (94 aa). 2 stretches are compositionally biased toward polar residues: residues 826–839 and 852–866; these read SSYS…SSPR and AFNS…SLSK.

The protein belongs to the TRAFAC class dynamin-like GTPase superfamily. Dynamin/Fzo/YdjA family. Binds PtdIns3P. Interacts with SH3P3 (via SH3 domain) and (via C-terminus) with GAMMA-ADR. May homooligomerize or heterooligomerize.

The protein localises to the cytoplasm. It localises to the cytosol. Its subcellular location is the golgi apparatus membrane. The protein resides in the cytoskeleton. It is found in the phragmoplast. The protein localises to the cytoplasmic vesicle. It localises to the clathrin-coated vesicle. It catalyses the reaction GTP + H2O = GDP + phosphate + H(+). Increased GTPase activity in the presence of phosphatidic acid. Its function is as follows. Microtubule-associated force-producing protein involved in clathrin-mediated vesicle trafficking from the trans-Golgi network to the central vacuole. Able to bind and hydrolyze GTP. Binds specifically to phosphatidylinositol 3-phosphate (PtdIns3P). The sequence is that of Dynamin-2A (DRP2A) from Arabidopsis thaliana (Mouse-ear cress).